A 156-amino-acid chain; its full sequence is 6,7-dimethyl-8-ribityllumazine synthase (156 aa).

Residues Phe22, 57 to 59 (AVE), and 81 to 83 (SVI) contribute to the 5-amino-6-(D-ribitylamino)uracil site. 86–87 (GT) lines the (2S)-2-hydroxy-3-oxobutyl phosphate pocket. Residue His89 is the Proton donor of the active site. Phe114 contributes to the 5-amino-6-(D-ribitylamino)uracil binding site. Residue Arg128 participates in (2S)-2-hydroxy-3-oxobutyl phosphate binding.

The protein belongs to the DMRL synthase family. In terms of assembly, forms an icosahedral capsid composed of 60 subunits, arranged as a dodecamer of pentamers.

It carries out the reaction (2S)-2-hydroxy-3-oxobutyl phosphate + 5-amino-6-(D-ribitylamino)uracil = 6,7-dimethyl-8-(1-D-ribityl)lumazine + phosphate + 2 H2O + H(+). It functions in the pathway cofactor biosynthesis; riboflavin biosynthesis; riboflavin from 2-hydroxy-3-oxobutyl phosphate and 5-amino-6-(D-ribitylamino)uracil: step 1/2. Functionally, catalyzes the formation of 6,7-dimethyl-8-ribityllumazine by condensation of 5-amino-6-(D-ribitylamino)uracil with 3,4-dihydroxy-2-butanone 4-phosphate. This is the penultimate step in the biosynthesis of riboflavin. This is 6,7-dimethyl-8-ribityllumazine synthase from Aliivibrio salmonicida (strain LFI1238) (Vibrio salmonicida (strain LFI1238)).